A 1408-amino-acid polypeptide reads, in one-letter code: ARF guanine-nucleotide exchange factor 1 (1408 aa).

The residue at position 49 (S49) is a Phosphoserine. The disordered stretch occupies residues 262 to 287 (TTTSDNDLSSTDDDSAVADDNKNEKP). The region spanning 552–706 (FNEKAKKGIQ…IIMLNTDSHN (155 aa)) is the SEC7 domain.

In terms of assembly, interacts (via N-terminal region) with SEC21 (via C-terminus). Interacts with GMH1. Interacts with DRS2.

It localises to the cytoplasm. Its subcellular location is the cytosol. It is found in the membrane. The protein resides in the endoplasmic reticulum. The protein localises to the mitochondrion. Its function is as follows. Activates the ARF proteins by exchanging bound GDP for free GTP. Plays a role in maintaining mitochondrial morphology, and in the turnover of mitochondria through mitophagy. This Saccharomyces cerevisiae (strain ATCC 204508 / S288c) (Baker's yeast) protein is ARF guanine-nucleotide exchange factor 1 (GEA1).